The primary structure comprises 518 residues: Probable inorganic carbon transporter subunit DabB (518 aa).

The next 13 membrane-spanning stretches (helical) occupy residues 3–23 (MQWV…LGSL), 37–57 (ISLL…FEWV), 65–85 (WVGV…IAFV), 114–134 (CVVT…WIAI), 165–185 (AEAC…TWFI), 207–227 (MLLA…GWLI), 242–262 (AGII…IVLS), 264–284 (MAQW…ALVM), 302–322 (MGLM…LHLV), 358–378 (WWFA…LADL), 379–399 (SGPY…IAER), 403–423 (LTSS…VVYT), and 442–462 (WKGD…YFLL).

Belongs to the inorganic carbon transporter (TC 9.A.2) DabB family. In terms of assembly, forms a complex with DabA.

The protein resides in the cell inner membrane. Its activity is regulated as follows. Intracellular DIC accumulation is sensitive to CCCP (carbonyl cyanide-m-chlorophenylhydrazone) and DCCD (N,N-dicyclohexylcarbodiimide) and therefore likely driven by either proton gradient, ATP, or both. Functionally, part of an energy-coupled inorganic carbon pump involved in transport of dissolved inorganic carbon (DIC) with downstream gene dabA (Tcr_0854); has been suggested to be a proton-DIC symporter. The protein is Probable inorganic carbon transporter subunit DabB of Hydrogenovibrio crunogenus (strain DSM 25203 / XCL-2) (Thiomicrospira crunogena).